Here is a 337-residue protein sequence, read N- to C-terminus: Holliday junction branch migration complex subunit RuvB (337 aa).

The segment at 4–186 (ADRLIAADNP…FGIVQRLEYY (183 aa)) is large ATPase domain (RuvB-L). ATP is bound by residues I25, R26, G67, K70, T71, T72, 133 to 135 (EDY), R176, Y186, and R223. T71 is a Mg(2+) binding site. A small ATPAse domain (RuvB-S) region spans residues 187-257 (KVDDLQYIVQ…IADKALNMLD (71 aa)). Residues 260–337 (VCGFDYMDRK…LHFGIDRPDK (78 aa)) form a head domain (RuvB-H) region. R315 and R320 together coordinate DNA.

This sequence belongs to the RuvB family. In terms of assembly, homohexamer. Forms an RuvA(8)-RuvB(12)-Holliday junction (HJ) complex. HJ DNA is sandwiched between 2 RuvA tetramers; dsDNA enters through RuvA and exits via RuvB. An RuvB hexamer assembles on each DNA strand where it exits the tetramer. Each RuvB hexamer is contacted by two RuvA subunits (via domain III) on 2 adjacent RuvB subunits; this complex drives branch migration. In the full resolvosome a probable DNA-RuvA(4)-RuvB(12)-RuvC(2) complex forms which resolves the HJ.

Its subcellular location is the cytoplasm. The catalysed reaction is ATP + H2O = ADP + phosphate + H(+). In terms of biological role, the RuvA-RuvB-RuvC complex processes Holliday junction (HJ) DNA during genetic recombination and DNA repair, while the RuvA-RuvB complex plays an important role in the rescue of blocked DNA replication forks via replication fork reversal (RFR). RuvA specifically binds to HJ cruciform DNA, conferring on it an open structure. The RuvB hexamer acts as an ATP-dependent pump, pulling dsDNA into and through the RuvAB complex. RuvB forms 2 homohexamers on either side of HJ DNA bound by 1 or 2 RuvA tetramers; 4 subunits per hexamer contact DNA at a time. Coordinated motions by a converter formed by DNA-disengaged RuvB subunits stimulates ATP hydrolysis and nucleotide exchange. Immobilization of the converter enables RuvB to convert the ATP-contained energy into a lever motion, pulling 2 nucleotides of DNA out of the RuvA tetramer per ATP hydrolyzed, thus driving DNA branch migration. The RuvB motors rotate together with the DNA substrate, which together with the progressing nucleotide cycle form the mechanistic basis for DNA recombination by continuous HJ branch migration. Branch migration allows RuvC to scan DNA until it finds its consensus sequence, where it cleaves and resolves cruciform DNA. The sequence is that of Holliday junction branch migration complex subunit RuvB from Aliivibrio salmonicida (strain LFI1238) (Vibrio salmonicida (strain LFI1238)).